The chain runs to 585 residues: Dihydroxy-acid dehydratase, mitochondrial (585 aa).

Residues 1 to 20 (MGLLTKVATSRQFSTTRCVA) constitute a mitochondrion transit peptide. A [2Fe-2S] cluster-binding site is contributed by Cys70. Asp102 contributes to the Mg(2+) binding site. Cys143 is a binding site for [2Fe-2S] cluster. Asp144 is a binding site for Mg(2+). Cys221 serves as a coordination point for [2Fe-2S] cluster. Position 474 (Glu474) interacts with Mg(2+). Catalysis depends on Ser500, which acts as the Proton acceptor.

Belongs to the IlvD/Edd family. [2Fe-2S] cluster serves as cofactor. Mg(2+) is required as a cofactor.

The protein resides in the mitochondrion. The enzyme catalyses (2R)-2,3-dihydroxy-3-methylbutanoate = 3-methyl-2-oxobutanoate + H2O. It carries out the reaction (2R,3R)-2,3-dihydroxy-3-methylpentanoate = (S)-3-methyl-2-oxopentanoate + H2O. Its pathway is amino-acid biosynthesis; L-isoleucine biosynthesis; L-isoleucine from 2-oxobutanoate: step 3/4. It functions in the pathway amino-acid biosynthesis; L-valine biosynthesis; L-valine from pyruvate: step 3/4. Catalytic activity is inactivated under iron-limiting conditions. In terms of biological role, dihydroxyacid dehydratase that catalyzes the third step in the common pathway leading to biosynthesis of branched-chain amino acids. Catalyzes the dehydration of (2R,3R)-2,3-dihydroxy-3-methylpentanoate (2,3-dihydroxy-3-methylvalerate) into 2-oxo-3-methylpentanoate (2-oxo-3-methylvalerate) and of (2R)-2,3-dihydroxy-3-methylbutanoate (2,3-dihydroxyisovalerate) into 2-oxo-3-methylbutanoate (2-oxoisovalerate), the penultimate precursor to L-isoleucine and L-valine, respectively. Required for the synthesis of alpha-isopropylmalate which modulates the activity of LEU3 and subsequently regulates the expression of LEU1. This chain is Dihydroxy-acid dehydratase, mitochondrial, found in Saccharomyces cerevisiae (strain ATCC 204508 / S288c) (Baker's yeast).